We begin with the raw amino-acid sequence, 752 residues long: Phosphoribosylformylglycinamidine synthase subunit PurL (752 aa).

The active site involves histidine 58. The ATP site is built by tyrosine 61 and lysine 103. Glutamate 105 provides a ligand contact to Mg(2+). Substrate contacts are provided by residues 106-109 (SHNH) and arginine 128. Histidine 107 (proton acceptor) is an active-site residue. Mg(2+) is bound at residue aspartate 129. Residue glutamine 253 participates in substrate binding. Residue aspartate 281 participates in Mg(2+) binding. 325 to 327 (ESQ) is a substrate binding site. ATP contacts are provided by aspartate 513 and glycine 550. Asparagine 551 provides a ligand contact to Mg(2+). Serine 553 lines the substrate pocket.

It belongs to the FGAMS family. Monomer. Part of the FGAM synthase complex composed of 1 PurL, 1 PurQ and 2 PurS subunits.

It is found in the cytoplasm. It carries out the reaction N(2)-formyl-N(1)-(5-phospho-beta-D-ribosyl)glycinamide + L-glutamine + ATP + H2O = 2-formamido-N(1)-(5-O-phospho-beta-D-ribosyl)acetamidine + L-glutamate + ADP + phosphate + H(+). It functions in the pathway purine metabolism; IMP biosynthesis via de novo pathway; 5-amino-1-(5-phospho-D-ribosyl)imidazole from N(2)-formyl-N(1)-(5-phospho-D-ribosyl)glycinamide: step 1/2. Part of the phosphoribosylformylglycinamidine synthase complex involved in the purines biosynthetic pathway. Catalyzes the ATP-dependent conversion of formylglycinamide ribonucleotide (FGAR) and glutamine to yield formylglycinamidine ribonucleotide (FGAM) and glutamate. The FGAM synthase complex is composed of three subunits. PurQ produces an ammonia molecule by converting glutamine to glutamate. PurL transfers the ammonia molecule to FGAR to form FGAM in an ATP-dependent manner. PurS interacts with PurQ and PurL and is thought to assist in the transfer of the ammonia molecule from PurQ to PurL. This chain is Phosphoribosylformylglycinamidine synthase subunit PurL, found in Streptomyces avermitilis (strain ATCC 31267 / DSM 46492 / JCM 5070 / NBRC 14893 / NCIMB 12804 / NRRL 8165 / MA-4680).